The chain runs to 79 residues: Small ribosomal subunit protein bS16 (79 aa).

This sequence belongs to the bacterial ribosomal protein bS16 family.

This chain is Small ribosomal subunit protein bS16, found in Nitratidesulfovibrio vulgaris (strain DSM 19637 / Miyazaki F) (Desulfovibrio vulgaris).